The chain runs to 305 residues: Spore coat protein CotA (305 aa).

The protein localises to the spore coat. It localises to the spore. Its subcellular location is the perispore. In terms of biological role, contributes to maintain proper thickness of the spore coat. May contribute to the formation of polar appendages. May play an important role in assembly of the outer layers of the spore coat. This chain is Spore coat protein CotA, found in Clostridioides difficile (strain 630) (Peptoclostridium difficile).